A 168-amino-acid polypeptide reads, in one-letter code: Disulfide bond formation protein B (168 aa).

Residues 1–6 are Cytoplasmic-facing; it reads MTSRWI. Residues 7–23 traverse the membrane as a helical segment; it reads FGLVFLVCAGLLAVAFY. Residues 24-41 are Periplasmic-facing; that stretch reads MEHVMGLEPCPLCWLQRF. Cysteines 33 and 36 form a disulfide. Residues 42–58 traverse the membrane as a helical segment; it reads GFMGAGLVSLLAFLHGP. The Cytoplasmic segment spans residues 59–65; it reads RGFGNRV. Residues 66–82 form a helical membrane-spanning segment; that stretch reads YGLLLIVAAGAGLAVAG. Topologically, residues 83-139 are periplasmic; that stretch reads RQLWLQSLPADQVPACGPSVDYMLEVLPWFEVLQTALKGTGDCAEVVWRFLGLSIPG. An intrachain disulfide couples Cys98 to Cys125. Residues 140–158 form a helical membrane-spanning segment; it reads WTAVFFSLLIVLGLFVMLR. Residues 159–168 lie on the Cytoplasmic side of the membrane; sequence RYSPRDWLQS.

The protein belongs to the DsbB family.

Its subcellular location is the cell inner membrane. Its function is as follows. Required for disulfide bond formation in some periplasmic proteins. Acts by oxidizing the DsbA protein. This chain is Disulfide bond formation protein B, found in Marinobacter nauticus (strain ATCC 700491 / DSM 11845 / VT8) (Marinobacter aquaeolei).